Reading from the N-terminus, the 543-residue chain is NXPE family member 4 (543 aa).

Positions 1–26 (MKTLASRKSLWMLLFIVIFWVSFTVF) are cleaved as a signal peptide. Residues Asn91, Asn159, and Asn223 are each glycosylated (N-linked (GlcNAc...) asparagine).

The protein belongs to the NXPE family.

The protein localises to the secreted. The protein is NXPE family member 4 (Nxpe4) of Mus musculus (Mouse).